The primary structure comprises 172 residues: Bacilliredoxin SRU_0242 (172 aa).

The segment at 141 to 172 (TDEAPPSDAPSRPDLSSSPNAGGLPSTFQSIS) is disordered. Positions 154–172 (DLSSSPNAGGLPSTFQSIS) are enriched in polar residues.

It belongs to the bacilliredoxin family.

This chain is Bacilliredoxin SRU_0242, found in Salinibacter ruber (strain DSM 13855 / M31).